The primary structure comprises 381 residues: Succinyl-diaminopimelate desuccinylase (381 aa).

H68 serves as a coordination point for Zn(2+). D70 is a catalytic residue. D101 provides a ligand contact to Zn(2+). The active-site Proton acceptor is E135. Zn(2+) is bound by residues E136, E164, and H350.

Belongs to the peptidase M20A family. DapE subfamily. Homodimer. Zn(2+) serves as cofactor. Co(2+) is required as a cofactor.

The enzyme catalyses N-succinyl-(2S,6S)-2,6-diaminopimelate + H2O = (2S,6S)-2,6-diaminopimelate + succinate. It functions in the pathway amino-acid biosynthesis; L-lysine biosynthesis via DAP pathway; LL-2,6-diaminopimelate from (S)-tetrahydrodipicolinate (succinylase route): step 3/3. In terms of biological role, catalyzes the hydrolysis of N-succinyl-L,L-diaminopimelic acid (SDAP), forming succinate and LL-2,6-diaminopimelate (DAP), an intermediate involved in the bacterial biosynthesis of lysine and meso-diaminopimelic acid, an essential component of bacterial cell walls. This Neisseria meningitidis serogroup A / serotype 4A (strain DSM 15465 / Z2491) protein is Succinyl-diaminopimelate desuccinylase.